Reading from the N-terminus, the 356-residue chain is Magnesium-protoporphyrin IX monomethyl ester [oxidative] cyclase (356 aa).

This sequence belongs to the AcsF family. It depends on Fe cation as a cofactor.

It catalyses the reaction Mg-protoporphyrin IX 13-monomethyl ester + 3 NADPH + 3 O2 + 2 H(+) = 3,8-divinyl protochlorophyllide a + 3 NADP(+) + 5 H2O. The protein operates within porphyrin-containing compound metabolism; chlorophyll biosynthesis (light-independent). In terms of biological role, catalyzes the formation of the isocyclic ring in chlorophyll biosynthesis. Mediates the cyclase reaction, which results in the formation of divinylprotochlorophyllide (Pchlide) characteristic of all chlorophylls from magnesium-protoporphyrin IX 13-monomethyl ester (MgPMME). In Parasynechococcus marenigrum (strain WH8102), this protein is Magnesium-protoporphyrin IX monomethyl ester [oxidative] cyclase.